A 49-amino-acid polypeptide reads, in one-letter code: U-theraphotoxin-Lk2a (49 aa).

Cystine bridges form between Cys4-Cys17, Cys8-Cys41, Cys22-Cys24, and Cys35-Cys46.

This sequence belongs to the neurotoxin 12 (Hwtx-2) family. 04 (lasiotoxin) subfamily. As to expression, expressed by the venom gland.

The protein localises to the secreted. Toxin that causes irreversible contractile paralysis into adult Aedes aegypti resulting in 100% mortality after 24 hours. In Lasiodora klugi (Bahia scarlet tarantula), this protein is U-theraphotoxin-Lk2a.